The chain runs to 246 residues: uncharacterized protein (246 aa).

Ser194 bears the Phosphoserine mark.

This is an uncharacterized protein from Schizosaccharomyces pombe (strain 972 / ATCC 24843) (Fission yeast).